We begin with the raw amino-acid sequence, 349 residues long: GTP 3',8-cyclase (349 aa).

The Radical SAM core domain occupies 26-245; sequence GFGRAVTYLR…SSFWTLTDIP (220 aa). Arg-35 lines the GTP pocket. [4Fe-4S] cluster is bound by residues Cys-42 and Cys-46. Tyr-48 is an S-adenosyl-L-methionine binding site. A [4Fe-4S] cluster-binding site is contributed by Cys-49. Arg-84 is a GTP binding site. Residue Gly-88 coordinates S-adenosyl-L-methionine. Residue Thr-118 participates in GTP binding. Ser-142 lines the S-adenosyl-L-methionine pocket. Lys-178 provides a ligand contact to GTP. Met-212 provides a ligand contact to S-adenosyl-L-methionine. Cys-275 and Cys-278 together coordinate [4Fe-4S] cluster. 280-282 lines the GTP pocket; that stretch reads RVR. Cys-292 is a [4Fe-4S] cluster binding site.

The protein belongs to the radical SAM superfamily. MoaA family. Monomer and homodimer. Requires [4Fe-4S] cluster as cofactor.

It catalyses the reaction GTP + AH2 + S-adenosyl-L-methionine = (8S)-3',8-cyclo-7,8-dihydroguanosine 5'-triphosphate + 5'-deoxyadenosine + L-methionine + A + H(+). It functions in the pathway cofactor biosynthesis; molybdopterin biosynthesis. Functionally, catalyzes the cyclization of GTP to (8S)-3',8-cyclo-7,8-dihydroguanosine 5'-triphosphate. The sequence is that of GTP 3',8-cyclase from Caulobacter vibrioides (strain ATCC 19089 / CIP 103742 / CB 15) (Caulobacter crescentus).